The chain runs to 186 residues: Ribosome maturation factor RimM (186 aa).

Residues 93–166 (PDEYYDHQLM…RAVIDPPPGL (74 aa)) enclose the PRC barrel domain. Positions 160–186 (IDPPPGLIDDRAEVDSSDTEAATEADA) are disordered. A compositionally biased stretch (acidic residues) spans 174–186 (DSSDTEAATEADA).

Belongs to the RimM family. In terms of assembly, binds ribosomal protein uS19.

It localises to the cytoplasm. An accessory protein needed during the final step in the assembly of 30S ribosomal subunit, possibly for assembly of the head region. Essential for efficient processing of 16S rRNA. May be needed both before and after RbfA during the maturation of 16S rRNA. It has affinity for free ribosomal 30S subunits but not for 70S ribosomes. In Streptomyces avermitilis (strain ATCC 31267 / DSM 46492 / JCM 5070 / NBRC 14893 / NCIMB 12804 / NRRL 8165 / MA-4680), this protein is Ribosome maturation factor RimM.